Here is a 252-residue protein sequence, read N- to C-terminus: 5-oxoprolinase subunit A (252 aa).

The protein belongs to the LamB/PxpA family. In terms of assembly, forms a complex composed of PxpA, PxpB and PxpC.

It carries out the reaction 5-oxo-L-proline + ATP + 2 H2O = L-glutamate + ADP + phosphate + H(+). Functionally, catalyzes the cleavage of 5-oxoproline to form L-glutamate coupled to the hydrolysis of ATP to ADP and inorganic phosphate. The sequence is that of 5-oxoprolinase subunit A from Staphylococcus carnosus (strain TM300).